The sequence spans 316 residues: RING finger protein 148 (316 aa).

The N-terminal stretch at 1-12 (MLLCVSCLSVNG) is a signal peptide. Asn56 carries N-linked (GlcNAc...) asparagine glycosylation. Residues 84-178 (VSGAVVLPEG…GNLKGMELLH (95 aa)) form the PA domain. The next 2 helical transmembrane spans lie at 173 to 193 (GMEL…IEVG) and 204 to 224 (VMSL…YCAW). An RING-type; atypical zinc finger spans residues 269 to 310 (CVVCFDMYKAQDVIRILTCKHFFHKTCIDPWLLAHRTCPMCK).

The protein resides in the membrane. In Mus musculus (Mouse), this protein is RING finger protein 148 (Rnf148).